Here is a 549-residue protein sequence, read N- to C-terminus: Chaperonin GroEL (549 aa).

Residues 29–32 (TLGP), lysine 50, 86–90 (DGTTT), glycine 414, 477–479 (NAL), and aspartate 493 each bind ATP.

Belongs to the chaperonin (HSP60) family. In terms of assembly, forms a cylinder of 14 subunits composed of two heptameric rings stacked back-to-back. Interacts with the co-chaperonin GroES.

Its subcellular location is the cytoplasm. It carries out the reaction ATP + H2O + a folded polypeptide = ADP + phosphate + an unfolded polypeptide.. Functionally, together with its co-chaperonin GroES, plays an essential role in assisting protein folding. The GroEL-GroES system forms a nano-cage that allows encapsulation of the non-native substrate proteins and provides a physical environment optimized to promote and accelerate protein folding. This is Chaperonin GroEL from Leptospira biflexa serovar Patoc (strain Patoc 1 / Ames).